The chain runs to 250 residues: MTVDPIHQFEIKRYVDLLNFGGVQFSFTNAALFMFGIVAIIFFFLTFATRGRTLVPGRAQSAAEMSYEFIAKMVRDSAGSEGMVFFPLVFSLFTFVLVSNVVGLIPYTFTVTAHLIVTAAMALLVIGTVIVYGFVRHGTHFLHLFVPSGVPAFLLPFLVVIEVVSFLSRPISLSLRLFANMLAGHIALKVFAFFVVGLASAGVVGWFGATLPFFMIVALYALELLVAMLQAYVFAVLTSIYLNDAIHPGH.

6 consecutive transmembrane segments (helical) span residues 27–47 (FTNA…FLTF), 85–105 (FFPL…VGLI), 115–135 (LIVT…YGFV), 141–161 (FLHL…LVVI), 181–201 (MLAG…LASA), and 223–243 (ELLV…IYLN).

It belongs to the ATPase A chain family. In terms of assembly, F-type ATPases have 2 components, CF(1) - the catalytic core - and CF(0) - the membrane proton channel. CF(1) has five subunits: alpha(3), beta(3), gamma(1), delta(1), epsilon(1). CF(0) has three main subunits: a(1), b(2) and c(9-12). The alpha and beta chains form an alternating ring which encloses part of the gamma chain. CF(1) is attached to CF(0) by a central stalk formed by the gamma and epsilon chains, while a peripheral stalk is formed by the delta and b chains.

The protein localises to the cell inner membrane. Functionally, key component of the proton channel; it plays a direct role in the translocation of protons across the membrane. The chain is ATP synthase subunit a from Xanthobacter autotrophicus (strain ATCC BAA-1158 / Py2).